The sequence spans 244 residues: MRLIQNMSTIAEYPSADCPSSRVIKIAVIGGSGVGKTALVVRFLTKRFIGDYERNVGNLYSREVQIDGEQVAIQVQDTPGVQVNANGLSCTDHVSRSIQWADAVVMVYSVTDRKSFDLIGQLHQLVTRTHSDRSIPIILVANKADLLHVRRVDAQEGPVLSSALSCSFYEVSASEDYNQVHSAFHRLCVDLAKLQPQTPINATSSVTEKKRSPLIPRPKSPNMQDLKRRFKQVLSAKVRTVTSV.

Residues proline 19–threonine 242 are small GTPase-like. GTP-binding positions include glycine 30 to threonine 37, aspartate 77 to valine 81, and asparagine 142 to aspartate 145. Residues isoleucine 200–asparagine 222 form a disordered region.

The protein belongs to the small GTPase superfamily. Ras family.

It carries out the reaction GTP + H2O = GDP + phosphate + H(+). The chain is Ras-like protein family member 11B from Danio rerio (Zebrafish).